Consider the following 1057-residue polypeptide: Carbamoyl phosphate synthase large chain (1057 aa).

The interval 1-401 (MPKRDDIQTI…SLLKAIRSLE (401 aa)) is carboxyphosphate synthetic domain. The ATP site is built by Arg129, Arg169, Gly175, Gly176, Lys208, Ile210, Glu215, Gly241, Ile242, His243, Gln284, and Glu298. One can recognise an ATP-grasp 1 domain in the interval 133–327 (RSLMNDLNVP…IAKLAAKIAV (195 aa)). Positions 284, 298, and 300 each coordinate Mg(2+). 3 residues coordinate Mn(2+): Gln284, Glu298, and Asn300. Residues 402 to 546 (YGVHHLGLPN…YGTYETENES (145 aa)) are oligomerization domain. The segment at 547–929 (IVTDKEKILV…ALYKGLTGSG (383 aa)) is carbamoyl phosphate synthetic domain. The ATP-grasp 2 domain maps to 671-861 (EALLHTIDVP…MAQLAMQAIM (191 aa)). ATP-binding residues include Arg707, Arg746, Leu748, Glu752, Gly777, Val778, His779, Ser780, Gln820, and Glu832. Residues Gln820, Glu832, and Asn834 each coordinate Mg(2+). The Mn(2+) site is built by Gln820, Glu832, and Asn834. An MGS-like domain is found at 930 to 1057 (VEVKDHGTVL…ESMTFSMRTM (128 aa)). The segment at 930–1057 (VEVKDHGTVL…ESMTFSMRTM (128 aa)) is allosteric domain.

This sequence belongs to the CarB family. In terms of assembly, composed of two chains; the small (or glutamine) chain promotes the hydrolysis of glutamine to ammonia, which is used by the large (or ammonia) chain to synthesize carbamoyl phosphate. Tetramer of heterodimers (alpha,beta)4. Mg(2+) is required as a cofactor. The cofactor is Mn(2+).

It carries out the reaction hydrogencarbonate + L-glutamine + 2 ATP + H2O = carbamoyl phosphate + L-glutamate + 2 ADP + phosphate + 2 H(+). The enzyme catalyses hydrogencarbonate + NH4(+) + 2 ATP = carbamoyl phosphate + 2 ADP + phosphate + 2 H(+). It participates in amino-acid biosynthesis; L-arginine biosynthesis; carbamoyl phosphate from bicarbonate: step 1/1. The protein operates within pyrimidine metabolism; UMP biosynthesis via de novo pathway; (S)-dihydroorotate from bicarbonate: step 1/3. Its function is as follows. Large subunit of the glutamine-dependent carbamoyl phosphate synthetase (CPSase). CPSase catalyzes the formation of carbamoyl phosphate from the ammonia moiety of glutamine, carbonate, and phosphate donated by ATP, constituting the first step of 2 biosynthetic pathways, one leading to arginine and/or urea and the other to pyrimidine nucleotides. The large subunit (synthetase) binds the substrates ammonia (free or transferred from glutamine from the small subunit), hydrogencarbonate and ATP and carries out an ATP-coupled ligase reaction, activating hydrogencarbonate by forming carboxy phosphate which reacts with ammonia to form carbamoyl phosphate. The sequence is that of Carbamoyl phosphate synthase large chain from Staphylococcus haemolyticus (strain JCSC1435).